Consider the following 403-residue polypeptide: Subtilisin-like protease CPC735_035780 (403 aa).

The signal sequence occupies residues M1 to A19. Residues A20–T117 constitute a propeptide that is removed on maturation. The region spanning S35–L116 is the Inhibitor I9 domain. Residues S127 to R403 enclose the Peptidase S8 domain. Catalysis depends on charge relay system residues D159 and H190. N233 and N251 each carry an N-linked (GlcNAc...) asparagine glycan. The Charge relay system role is filled by S349. An N-linked (GlcNAc...) asparagine glycan is attached at N399.

This sequence belongs to the peptidase S8 family.

It localises to the secreted. Functionally, secreted subtilisin-like serine protease with keratinolytic activity that contributes to pathogenicity. This Coccidioides posadasii (strain C735) (Valley fever fungus) protein is Subtilisin-like protease CPC735_035780.